Here is a 182-residue protein sequence, read N- to C-terminus: Probable RNA 2'-phosphotransferase (182 aa).

It belongs to the KptA/TPT1 family.

Functionally, removes the 2'-phosphate from RNA via an intermediate in which the phosphate is ADP-ribosylated by NAD followed by a presumed transesterification to release the RNA and generate ADP-ribose 1''-2''-cyclic phosphate (APPR&gt;P). May function as an ADP-ribosylase. The chain is Probable RNA 2'-phosphotransferase from Trichormus variabilis (strain ATCC 29413 / PCC 7937) (Anabaena variabilis).